A 544-amino-acid polypeptide reads, in one-letter code: Phenylalanine--tRNA ligase beta subunit (544 aa).

Residues 270-346 enclose the B5 domain; it reads LEPKTRFLTK…KGYGYENIKV (77 aa). 4 residues coordinate Mg(2+): Asp324, Asp330, Glu333, and Asp334.

It belongs to the phenylalanyl-tRNA synthetase beta subunit family. Type 2 subfamily. In terms of assembly, tetramer of two alpha and two beta subunits. Mg(2+) serves as cofactor.

The protein resides in the cytoplasm. It carries out the reaction tRNA(Phe) + L-phenylalanine + ATP = L-phenylalanyl-tRNA(Phe) + AMP + diphosphate + H(+). This chain is Phenylalanine--tRNA ligase beta subunit, found in Methanosarcina barkeri (strain Fusaro / DSM 804).